The following is a 322-amino-acid chain: MMDPYATTHRRLKQIQGHFMTPQSLRVLPQFTLNSLNNKSNISSMWRKLTTSSRIGAVSIPPLTAYYIFKLFKGKHRKFINDKDIEIIIKEISGNDIFDQVVKLASKVIGFLGVIQISNRMETHLGVKLTFSKSYQLLVTLSSILDTILSFTKLTQKWGIIFCIVSILYCIINIRMLYLTLAHNKTVERLLSVTRTKCQGFKMNIPALGAWGSVVAITFYIWLKEAKKLAQSTGGILTMTAFLLSAIAAIRVGLRAAMTSFPGLTPFEGSSAVVIAIILGALPLIPYYTTSEWSRTLLSGYLSIVISMIINSFFAWKTPSML.

5 consecutive transmembrane segments (helical) span residues 159–179, 203–223, 234–254, 267–287, and 296–316; these read GIIF…MLYL, MNIP…YIWL, GGIL…RVGL, FEGS…LIPY, and TLLS…FFAW.

It is found in the membrane. This is an uncharacterized protein from Dictyostelium discoideum (Social amoeba).